Reading from the N-terminus, the 276-residue chain is Putative oxidoreductase SadH (276 aa).

Residue serine 142 participates in substrate binding. The active-site Proton acceptor is the tyrosine 155.

It belongs to the short-chain dehydrogenases/reductases (SDR) family.

Its function is as follows. Required for maintaining the appropriate mycolic acid composition and permeability of the envelope on its exposure to acidic pH. The polypeptide is Putative oxidoreductase SadH (sadH) (Mycobacterium tuberculosis (strain CDC 1551 / Oshkosh)).